The following is a 93-amino-acid chain: Large ribosomal subunit protein eL42 (93 aa).

Residues Cys-11, Cys-14, Cys-72, and Cys-75 each coordinate Zn(2+). The C4-type zinc-finger motif lies at 11–75; that stretch reads CPHCHSHFEH…TDLKYRCSEC (65 aa).

Belongs to the eukaryotic ribosomal protein eL42 family. In terms of assembly, part of the 50S ribosomal subunit. Zn(2+) is required as a cofactor.

In terms of biological role, binds to the 23S rRNA. The sequence is that of Large ribosomal subunit protein eL42 (rpl44e) from Natronomonas pharaonis (strain ATCC 35678 / DSM 2160 / CIP 103997 / JCM 8858 / NBRC 14720 / NCIMB 2260 / Gabara) (Halobacterium pharaonis).